The chain runs to 261 residues: Pantothenate synthetase (261 aa).

29–36 (MGALHNGH) contacts ATP. Histidine 36 functions as the Proton donor in the catalytic mechanism. Residue glutamine 60 coordinates (R)-pantoate. Glutamine 60 contributes to the beta-alanine binding site. Residue 147–150 (GEKD) participates in ATP binding. (R)-pantoate is bound at residue glutamine 153. 184 to 187 (LSSR) is an ATP binding site.

It belongs to the pantothenate synthetase family. Homodimer.

The protein resides in the cytoplasm. It carries out the reaction (R)-pantoate + beta-alanine + ATP = (R)-pantothenate + AMP + diphosphate + H(+). It participates in cofactor biosynthesis; (R)-pantothenate biosynthesis; (R)-pantothenate from (R)-pantoate and beta-alanine: step 1/1. In terms of biological role, catalyzes the condensation of pantoate with beta-alanine in an ATP-dependent reaction via a pantoyl-adenylate intermediate. This is Pantothenate synthetase from Francisella tularensis subsp. holarctica (strain FTNF002-00 / FTA).